A 265-amino-acid polypeptide reads, in one-letter code: MSCIKNSFEALKAKNEKALVGFVTAGDPDFGKSVEIVKAMCEGGMDVLELGIPFSDPTADGPVIQRSSQRALSSGMSLPKVLEMVKIVRGFTKIPIVLFGYYNPIFSYGGKRFYEDALAAGADGVLIVDLPPEESAELTSLWEGDDFDFIRLVAPTTGQDRMKQIAGEASGFIYLVSMTGVTGSQGLDSSKVADVNAPLKAVTDLPVCVGFGISTPEHVKAVAAVSDGVVVGSAFERLIEENLENRGLHTMVQEYTESLKAATRG.

Catalysis depends on proton acceptor residues Glu-49 and Asp-60.

This sequence belongs to the TrpA family. Tetramer of two alpha and two beta chains.

The enzyme catalyses (1S,2R)-1-C-(indol-3-yl)glycerol 3-phosphate + L-serine = D-glyceraldehyde 3-phosphate + L-tryptophan + H2O. The protein operates within amino-acid biosynthesis; L-tryptophan biosynthesis; L-tryptophan from chorismate: step 5/5. Its function is as follows. The alpha subunit is responsible for the aldol cleavage of indoleglycerol phosphate to indole and glyceraldehyde 3-phosphate. The protein is Tryptophan synthase alpha chain of Desulfatibacillum aliphaticivorans.